A 103-amino-acid polypeptide reads, in one-letter code: Non-histone chromosomal protein HMG-14B (103 aa).

The disordered stretch occupies residues 1–103 (MPKRKVAASR…AVEKEEVKSE (103 aa)). The segment covering 29-50 (VPDKAEPKAKALAAKDKSENKK) has biased composition (basic and acidic residues). Positions 51-60 (AQSKGKKGPK) are enriched in basic residues. Basic and acidic residues predominate over residues 94–103 (AVEKEEVKSE).

This sequence belongs to the HMGN family.

It is found in the nucleus. Binds to the inner side of the nucleosomal DNA thus altering the interaction between the DNA and the histone octamer. May be involved in the process which maintains transcribable genes in a unique chromatin conformation. This is Non-histone chromosomal protein HMG-14B (HMG14) from Gallus gallus (Chicken).